We begin with the raw amino-acid sequence, 395 residues long: Phosphoribulokinase, chloroplastic (395 aa).

The transit peptide at 1 to 46 (MAVSTIYSTQALNSTHFLTSSSSSKQVFLYRRQPQTNRRFNTLITC) directs the protein to the chloroplast. Cys-61 and Cys-100 form a disulfide bridge.

It belongs to the phosphoribulokinase family.

It is found in the plastid. The protein localises to the chloroplast. The enzyme catalyses D-ribulose 5-phosphate + ATP = D-ribulose 1,5-bisphosphate + ADP + H(+). The protein operates within carbohydrate biosynthesis; Calvin cycle. With respect to regulation, light regulated via thioredoxin by reversible oxidation/reduction of sulfhydryl/disulfide groups. The sequence is that of Phosphoribulokinase, chloroplastic from Arabidopsis thaliana (Mouse-ear cress).